A 651-amino-acid polypeptide reads, in one-letter code: p-hydroxybenzoic acid efflux pump subunit AaeB (651 aa).

A run of 11 helical transmembrane segments spans residues 11–31, 41–61, 67–87, 91–111, 119–139, 150–170, 368–388, 405–425, 429–449, 460–480, and 481–501; these read FAFK…HLQL, AAIV…SGAI, LRII…VLTI, VLTL…SSLV, FGLA…TPLL, EIVL…PRSI, LFWL…IAVV, FLLG…FIIP, QSML…GIEV, LAST…VSLF, and LDSA…LLLI.

Belongs to the aromatic acid exporter ArAE (TC 2.A.85) family.

The protein resides in the cell inner membrane. In terms of biological role, forms an efflux pump with AaeA. Could function as a metabolic relief valve, allowing to eliminate certain compounds when they accumulate to high levels in the cell. The chain is p-hydroxybenzoic acid efflux pump subunit AaeB from Yersinia enterocolitica serotype O:8 / biotype 1B (strain NCTC 13174 / 8081).